A 732-amino-acid polypeptide reads, in one-letter code: Probable zinc transporter cis4 (732 aa).

Transmembrane regions (helical) follow at residues 52–72 (ETLG…GLEV), 79–99 (FYLI…LGIY), 111–131 (VIIA…LGTL), 163–183 (YIAF…LGYF), 189–209 (VFYA…FYLV), 219–239 (LAFL…VLPL), 240–260 (GTIN…IFCI), 268–288 (IQFY…SAII), 350–370 (IFYF…YGLW), 380–400 (AIHM…TTLA), 415–435 (IEAL…FSIV), and 453–473 (LLLV…AFNH). Residues 526–547 (HVSQHEHTHENSQEHHHEHNHN) are disordered. A run of 2 helical transmembrane segments spans residues 586 to 606 (IFLH…STIL) and 615 to 635 (FDPL…LPLI).

Belongs to the cation diffusion facilitator (CDF) transporter (TC 2.A.4) family. SLC30A subfamily. Interacts with zrg17.

Its subcellular location is the endoplasmic reticulum membrane. The protein resides in the golgi apparatus. It localises to the cis-Golgi network membrane. In terms of biological role, probable zinc transporter involved in Golgi membrane trafficking through the regulation of zinc homeostasis. The sequence is that of Probable zinc transporter cis4 (cis4) from Schizosaccharomyces pombe (strain 972 / ATCC 24843) (Fission yeast).